Here is a 349-residue protein sequence, read N- to C-terminus: Heat-inducible transcription repressor HrcA (349 aa).

Belongs to the HrcA family.

Functionally, negative regulator of class I heat shock genes (grpE-dnaK-dnaJ and groELS operons). Prevents heat-shock induction of these operons. In Xylella fastidiosa (strain M23), this protein is Heat-inducible transcription repressor HrcA.